A 552-amino-acid polypeptide reads, in one-letter code: Probable protein kinase UbiB (552 aa).

A helical membrane pass occupies residues 22–42; that stretch reads LLPANLPLAATLLLLPFKLFP. A Protein kinase domain is found at 118 to 498; that stretch reads SFNIEPLASA…QQLARQRNRR (381 aa). ATP contacts are provided by residues 124-132 and lysine 146; that span reads LASASVAQV. The active-site Proton acceptor is aspartate 281. 2 helical membrane-spanning segments follow: residues 501 to 521 and 530 to 550; these read ITLLAFAGAIALAWPSLGEGI and FGDIPTASYLLAAIGLSAWLL.

The protein belongs to the ABC1 family. UbiB subfamily.

The protein resides in the cell inner membrane. It participates in cofactor biosynthesis; ubiquinone biosynthesis [regulation]. Its function is as follows. Is probably a protein kinase regulator of UbiI activity which is involved in aerobic coenzyme Q (ubiquinone) biosynthesis. The polypeptide is Probable protein kinase UbiB (Cellvibrio japonicus (strain Ueda107) (Pseudomonas fluorescens subsp. cellulosa)).